The chain runs to 72 residues: Large ribosomal subunit protein bL31 (72 aa).

Zn(2+) contacts are provided by Cys16, Cys18, Cys38, and Cys41.

It belongs to the bacterial ribosomal protein bL31 family. Type A subfamily. Part of the 50S ribosomal subunit. Zn(2+) is required as a cofactor.

In terms of biological role, binds the 23S rRNA. The chain is Large ribosomal subunit protein bL31 from Azoarcus sp. (strain BH72).